A 196-amino-acid chain; its full sequence is Guanylate kinase (196 aa).

Residues 1-24 form a disordered region; sequence MPVESGAGNDQPKRLTVLSGPSGV. The Guanylate kinase-like domain maps to 13-191; sequence KRLTVLSGPS…VCDELLALIA (179 aa). 20–27 provides a ligand contact to ATP; the sequence is GPSGVGKS.

Belongs to the guanylate kinase family.

It is found in the cytoplasm. It carries out the reaction GMP + ATP = GDP + ADP. Essential for recycling GMP and indirectly, cGMP. This chain is Guanylate kinase, found in Thermobifida fusca (strain YX).